Here is a 193-residue protein sequence, read N- to C-terminus: Corrinoid adenosyltransferase (193 aa).

ATP is bound by residues 5 to 13 (TKTGDKGQT), K22, 130 to 135 (RRAERR), and N154.

The protein belongs to the Cob(I)alamin adenosyltransferase family. In terms of assembly, homotrimer.

It is found in the cytoplasm. The catalysed reaction is 2 cob(II)yrinate a,c diamide + reduced [electron-transfer flavoprotein] + 2 ATP = 2 adenosylcob(III)yrinate a,c-diamide + 2 triphosphate + oxidized [electron-transfer flavoprotein] + 3 H(+). It carries out the reaction 2 cob(II)alamin + reduced [electron-transfer flavoprotein] + 2 ATP = 2 adenosylcob(III)alamin + 2 triphosphate + oxidized [electron-transfer flavoprotein] + 3 H(+). It functions in the pathway cofactor biosynthesis; adenosylcobalamin biosynthesis; adenosylcobalamin from cob(II)yrinate a,c-diamide: step 2/7. This is Corrinoid adenosyltransferase (yvqK) from Bacillus subtilis (strain 168).